Reading from the N-terminus, the 420-residue chain is Glucose-1-phosphate adenylyltransferase (420 aa).

Alpha-D-glucose 1-phosphate-binding positions include tyrosine 107, glycine 172, 187 to 188, and serine 205; that span reads EK.

It belongs to the bacterial/plant glucose-1-phosphate adenylyltransferase family. Homotetramer.

It carries out the reaction alpha-D-glucose 1-phosphate + ATP + H(+) = ADP-alpha-D-glucose + diphosphate. Its pathway is glycan biosynthesis; glycogen biosynthesis. In terms of biological role, involved in the biosynthesis of ADP-glucose, a building block required for the elongation reactions to produce glycogen. Catalyzes the reaction between ATP and alpha-D-glucose 1-phosphate (G1P) to produce pyrophosphate and ADP-Glc. The polypeptide is Glucose-1-phosphate adenylyltransferase (Agrobacterium fabrum (strain C58 / ATCC 33970) (Agrobacterium tumefaciens (strain C58))).